The sequence spans 360 residues: MFLWLAHFSNWLTGLNIFQYTTFRAVMAALTALAFSLMFGPWTIRRLTALKCGQAVRTDGPQTHLVKNGTPTMGGSLILTAITVSTLLWGNWANPYIWILLGVLLATGALGFYDDWRKVVYKDPNGVSAKFKMVWQSSVAIIAGLALFYLAANSANNILIVPFFKQIALPLGVVGFLVLSYLTIVGTSNAVNLTDGLDGLATFPVVLVAAGLAIFAYASGHSQFAQYLQLPYVAGANEVVIFCTAMCGACLGFLWFNAYPAQVFMGDVGALALGAALGTVAVIVRQEFVLVIMGGLFVVEAVSVMLQVGWYKKTKKRIFLMAPIHHHYEQKGWKETQVVVRFWIITIVLVLIGLSTLKIR.

A run of 10 helical transmembrane segments spans residues 24–44, 69–89, 92–112, 133–153, 158–178, 199–219, 239–259, 263–283, 288–308, and 337–357; these read RAVMAALTALAFSLMFGPWTI, GTPTMGGSLILTAITVSTLLW, WANPYIWILLGVLLATGALGF, MVWQSSVAIIAGLALFYLAAN, ILIVPFFKQIALPLGVVGFLV, GLATFPVVLVAAGLAIFAYAS, VVIFCTAMCGACLGFLWFNAY, VFMGDVGALALGAALGTVAVI, FVLVIMGGLFVVEAVSVMLQV, and QVVVRFWIITIVLVLIGLSTL.

The protein belongs to the glycosyltransferase 4 family. MraY subfamily. The cofactor is Mg(2+).

The protein resides in the cell inner membrane. It carries out the reaction UDP-N-acetyl-alpha-D-muramoyl-L-alanyl-gamma-D-glutamyl-meso-2,6-diaminopimeloyl-D-alanyl-D-alanine + di-trans,octa-cis-undecaprenyl phosphate = di-trans,octa-cis-undecaprenyl diphospho-N-acetyl-alpha-D-muramoyl-L-alanyl-D-glutamyl-meso-2,6-diaminopimeloyl-D-alanyl-D-alanine + UMP. Its pathway is cell wall biogenesis; peptidoglycan biosynthesis. Catalyzes the initial step of the lipid cycle reactions in the biosynthesis of the cell wall peptidoglycan: transfers peptidoglycan precursor phospho-MurNAc-pentapeptide from UDP-MurNAc-pentapeptide onto the lipid carrier undecaprenyl phosphate, yielding undecaprenyl-pyrophosphoryl-MurNAc-pentapeptide, known as lipid I. The polypeptide is Phospho-N-acetylmuramoyl-pentapeptide-transferase (Neisseria meningitidis serogroup A / serotype 4A (strain DSM 15465 / Z2491)).